The following is a 320-amino-acid chain: Acetyl-coenzyme A carboxylase carboxyl transferase subunit alpha (320 aa).

In terms of domain architecture, CoA carboxyltransferase C-terminal spans 42 to 295 (IEDKAKAALH…GDAIAQAFSD (254 aa)).

The protein belongs to the AccA family. Acetyl-CoA carboxylase is a heterohexamer composed of biotin carboxyl carrier protein (AccB), biotin carboxylase (AccC) and two subunits each of ACCase subunit alpha (AccA) and ACCase subunit beta (AccD).

The protein resides in the cytoplasm. It catalyses the reaction N(6)-carboxybiotinyl-L-lysyl-[protein] + acetyl-CoA = N(6)-biotinyl-L-lysyl-[protein] + malonyl-CoA. The protein operates within lipid metabolism; malonyl-CoA biosynthesis; malonyl-CoA from acetyl-CoA: step 1/1. In terms of biological role, component of the acetyl coenzyme A carboxylase (ACC) complex. First, biotin carboxylase catalyzes the carboxylation of biotin on its carrier protein (BCCP) and then the CO(2) group is transferred by the carboxyltransferase to acetyl-CoA to form malonyl-CoA. In Afipia carboxidovorans (strain ATCC 49405 / DSM 1227 / KCTC 32145 / OM5) (Oligotropha carboxidovorans), this protein is Acetyl-coenzyme A carboxylase carboxyl transferase subunit alpha.